Here is a 135-residue protein sequence, read N- to C-terminus: T-cell receptor gamma chain V region 5/10-13 (135 aa).

The signal sequence occupies residues 1-18 (MLLLRWPTFCCLWVFGLG). The tract at residues 19–114 (QLEQTELSVT…DEATYYCAVC (96 aa)) is v segment. The interval 115-135 (RSGTSWVKIFAKGTKLVVIPP) is j segment.

This chain is T-cell receptor gamma chain V region 5/10-13 (Tcrg-V1), found in Mus musculus (Mouse).